Consider the following 108-residue polypeptide: Insertion element IS6110 uncharacterized 12.0 kDa protein (108 aa).

It belongs to the transposase 8 family.

The sequence is that of Insertion element IS6110 uncharacterized 12.0 kDa protein from Mycobacterium bovis (strain ATCC BAA-935 / AF2122/97).